Reading from the N-terminus, the 968-residue chain is Glycine dehydrogenase (decarboxylating) (968 aa).

Lys-712 bears the N6-(pyridoxal phosphate)lysine mark.

The protein belongs to the GcvP family. In terms of assembly, the glycine cleavage system is composed of four proteins: P, T, L and H. Pyridoxal 5'-phosphate serves as cofactor.

The enzyme catalyses N(6)-[(R)-lipoyl]-L-lysyl-[glycine-cleavage complex H protein] + glycine + H(+) = N(6)-[(R)-S(8)-aminomethyldihydrolipoyl]-L-lysyl-[glycine-cleavage complex H protein] + CO2. In terms of biological role, the glycine cleavage system catalyzes the degradation of glycine. The P protein binds the alpha-amino group of glycine through its pyridoxal phosphate cofactor; CO(2) is released and the remaining methylamine moiety is then transferred to the lipoamide cofactor of the H protein. The sequence is that of Glycine dehydrogenase (decarboxylating) from Prochlorococcus marinus (strain NATL1A).